The primary structure comprises 226 residues: Eukaryotic translation initiation factor 3 subunit K (226 aa).

A PCI domain is found at 42–200 (YNLDANLSLL…QLIVLPRNEF (159 aa)).

The protein belongs to the eIF-3 subunit K family. Component of the eukaryotic translation initiation factor 3 (eIF-3) complex.

It is found in the cytoplasm. Component of the eukaryotic translation initiation factor 3 (eIF-3) complex, which is involved in protein synthesis of a specialized repertoire of mRNAs and, together with other initiation factors, stimulates binding of mRNA and methionyl-tRNAi to the 40S ribosome. The eIF-3 complex specifically targets and initiates translation of a subset of mRNAs involved in cell proliferation. The polypeptide is Eukaryotic translation initiation factor 3 subunit K (TIF3K1) (Oryza sativa subsp. japonica (Rice)).